The chain runs to 183 residues: Holliday junction branch migration complex subunit RuvA (183 aa).

Residues 1–64 form a domain I region; that stretch reads MVVGIEGIIT…EDSNKFYGFL (64 aa). A domain II region spans residues 65–139; the sequence is DKDEQKMFEM…DTRTKLENVS (75 aa). A region of interest (flexible linker) is located at residue Ser139. The domain III stretch occupies residues 139 to 183; sequence SDDKSEALAALLTLGFKQEKIISVLASAQATGTSELIKEALKKLR.

This sequence belongs to the RuvA family. As to quaternary structure, homotetramer. Forms an RuvA(8)-RuvB(12)-Holliday junction (HJ) complex. HJ DNA is sandwiched between 2 RuvA tetramers; dsDNA enters through RuvA and exits via RuvB. An RuvB hexamer assembles on each DNA strand where it exits the tetramer. Each RuvB hexamer is contacted by two RuvA subunits (via domain III) on 2 adjacent RuvB subunits; this complex drives branch migration. In the full resolvosome a probable DNA-RuvA(4)-RuvB(12)-RuvC(2) complex forms which resolves the HJ.

Its subcellular location is the cytoplasm. In terms of biological role, the RuvA-RuvB-RuvC complex processes Holliday junction (HJ) DNA during genetic recombination and DNA repair, while the RuvA-RuvB complex plays an important role in the rescue of blocked DNA replication forks via replication fork reversal (RFR). RuvA specifically binds to HJ cruciform DNA, conferring on it an open structure. The RuvB hexamer acts as an ATP-dependent pump, pulling dsDNA into and through the RuvAB complex. HJ branch migration allows RuvC to scan DNA until it finds its consensus sequence, where it cleaves and resolves the cruciform DNA. The sequence is that of Holliday junction branch migration complex subunit RuvA from Campylobacter jejuni subsp. doylei (strain ATCC BAA-1458 / RM4099 / 269.97).